The primary structure comprises 549 residues: Mitochondrial hydroperoxide bicyclase CYP50918A1 (549 aa).

The interval M1–L75 is disordered. Residues S8–P26 are compositionally biased toward basic and acidic residues. The segment covering A27–P41 has biased composition (low complexity). C491 lines the heme pocket. Positions D528 to H549 are disordered.

It belongs to the cytochrome P450 family. Heme is required as a cofactor.

It localises to the mitochondrion. It catalyses the reaction (13S)-hydroperoxy-(9Z,11E,15Z)-octadecatrienoate = plasmodiophorol A. It carries out the reaction (13S)-hydroperoxy-(9Z,11E,15Z)-octadecatrienoate = plasmodiophorol B. The protein operates within lipid metabolism; oxylipin biosynthesis. Functionally, cytochrome P450 hydroperoxide bicyclase involved in the metabolism of oxylipins natural products such as egregiachlorides, hybridalactone, ecklonialactones and related bicyclic oxylipins. Isomerizes the hydroperoxides into epoxyalcohols via epoxyallylic radical. Can use alpha-linolenic 13-hydroperoxide ((9Z,11E,13S,15Z)-13-hydroperoxy-9,11,15-octadecatrienoic, 13-HPOT) as preferred substrate to produce the heterobicyclic oxylipins plasmodiophorol A (6-oxabicyclo[3.1.0]hexane) and plasmodiophorol B (2-oxabicyclo[2.2.1]heptane) at the ratio 12:1 and a minor product plasmodiophorol C (cyclopentanediol) formed through the hydrolysis of plasmodiophorols A and B and, to a lower extent, active with linoleic acid 13-hydroperoxide ((9Z,11E,13S)-13-hydroperoxy-9,11-octadecadienoic, 13-HPOD), linoleic acid 9-hydroperoxide ((9S,10E,12Z)-9-hydroperoxy-10,12-octadecadienoic, 9-HPOD) and alpha-linolenic 9-hydroperoxide ((9S,10E,12Z,15Z)-9-hydroperoxy-10,12,15-octadecatrienoic, 9-HPOT). The sequence is that of Mitochondrial hydroperoxide bicyclase CYP50918A1 from Plasmodiophora brassicae (Clubroot disease agent).